The sequence spans 319 residues: tRNA uridine(34) hydroxylase (319 aa).

A Rhodanese domain is found at 127–221; it reads KQEDTVIIDA…YGKDPEVQGE (95 aa). C181 acts as the Cysteine persulfide intermediate in catalysis.

It belongs to the TrhO family.

It carries out the reaction uridine(34) in tRNA + AH2 + O2 = 5-hydroxyuridine(34) in tRNA + A + H2O. Catalyzes oxygen-dependent 5-hydroxyuridine (ho5U) modification at position 34 in tRNAs. In Bacillus cereus (strain ZK / E33L), this protein is tRNA uridine(34) hydroxylase.